The sequence spans 474 residues: Aspartyl/glutamyl-tRNA(Asn/Gln) amidotransferase subunit B (474 aa).

The protein belongs to the GatB/GatE family. GatB subfamily. In terms of assembly, heterotrimer of A, B and C subunits.

It catalyses the reaction L-glutamyl-tRNA(Gln) + L-glutamine + ATP + H2O = L-glutaminyl-tRNA(Gln) + L-glutamate + ADP + phosphate + H(+). It carries out the reaction L-aspartyl-tRNA(Asn) + L-glutamine + ATP + H2O = L-asparaginyl-tRNA(Asn) + L-glutamate + ADP + phosphate + 2 H(+). In terms of biological role, allows the formation of correctly charged Asn-tRNA(Asn) or Gln-tRNA(Gln) through the transamidation of misacylated Asp-tRNA(Asn) or Glu-tRNA(Gln) in organisms which lack either or both of asparaginyl-tRNA or glutaminyl-tRNA synthetases. The reaction takes place in the presence of glutamine and ATP through an activated phospho-Asp-tRNA(Asn) or phospho-Glu-tRNA(Gln). The chain is Aspartyl/glutamyl-tRNA(Asn/Gln) amidotransferase subunit B from Helicobacter hepaticus (strain ATCC 51449 / 3B1).